Reading from the N-terminus, the 576-residue chain is MRASKYHLNTLKEAPAEAEIASHQLMTRAGMIRKLAGGIYTYMPLGLKVIRKIEGIVREEMNAAGAIELLMPVVQPAELWMESGRWEQYGAELLRIKDRHQRDFVLQPTSEEVITDIARNEIQSYRQLPLNFYHIQTKFRDERRPRFGLMRGREFTMKDAYSFDRDEAGAQRSYDIMYAAYQRIFQRLGLEFRAVAADTGSIGGSRSHEFQVIADTGEDLIVYNPESDYAANIELAEAPALLATRAAPGQDLEAVPTPGAAKCEDVAKLLDLPLARTIKSIVLAVDQPEGPAQVWLLLLRGDHELNEIKAGKLPGLAGFRFATETEILDHFGCKPGYLGPIKTARPVHVVADRTVANMADFVCGANREDYHYQGANWARDLPEPELVADLRNVVEGDPSPDGKGALSIQRGIEVGHVFFLGTKYSEALKATFLDDNGKPAVLQMGCYGIGVTRIVGAAIEQNHDARGIIWPRAIAPYEVVICPVGWGKSETVRDTALALYEALRARGVDVMLDDRDSRPGVMFAEWELIGVPLRVTVGERGLNEGVVELQARREAEAAKVPVDQALAQTLAKLDLL.

This sequence belongs to the class-II aminoacyl-tRNA synthetase family. ProS type 1 subfamily. In terms of assembly, homodimer.

The protein localises to the cytoplasm. The enzyme catalyses tRNA(Pro) + L-proline + ATP = L-prolyl-tRNA(Pro) + AMP + diphosphate. Functionally, catalyzes the attachment of proline to tRNA(Pro) in a two-step reaction: proline is first activated by ATP to form Pro-AMP and then transferred to the acceptor end of tRNA(Pro). As ProRS can inadvertently accommodate and process non-cognate amino acids such as alanine and cysteine, to avoid such errors it has two additional distinct editing activities against alanine. One activity is designated as 'pretransfer' editing and involves the tRNA(Pro)-independent hydrolysis of activated Ala-AMP. The other activity is designated 'posttransfer' editing and involves deacylation of mischarged Ala-tRNA(Pro). The misacylated Cys-tRNA(Pro) is not edited by ProRS. The polypeptide is Proline--tRNA ligase (Bordetella bronchiseptica (strain ATCC BAA-588 / NCTC 13252 / RB50) (Alcaligenes bronchisepticus)).